A 517-amino-acid polypeptide reads, in one-letter code: MDIIGGQHLRQMWDDLADVYGHKTALICESSSGVVNRYSYLELNQEINRTANLFYTLGIRKGDKVALHLDNCPEFIFCWFGLAKIGAIMVPINARLLREESAWILQNSQACLLVTSAQFYPMYQQIQQEDASQLRHICLIDMALPADDGVSSFTQLKNQQPATLCYAPPLSTDDTAEILFTSGTTSRPKGVVITHYNLRFAGYYSAWQCALRDDDVYLTVMPAFHIDCQCTAAMAAFSAGATFVLVEKYSARAFWGQVQKYRATITECIPMMIRTLMVQPPSANDRQHCLREVMFYLNLSEQEKDAFCERFSVRLLTSYGMTETIVGIIGDRPGDKRRWPSIGRAGFCYEAEIRDDHNRPLPAGELGEICIKGVPGKTIFKEYFLNPKATAKVLEADGWLHTGDTGYRDEEGFFYFVDRRCNMIKRGGENVSCVELENIIAAHPKIQDIVVVGIKDSIRDEAIKAFVVLNEGETLSEEEFFRFCEQNMAKFKVPSYLEIRKDLPRNCSGKIIRKNLK.

It belongs to the ATP-dependent AMP-binding enzyme family.

The enzyme catalyses 4-(trimethylamino)butanoate + ATP + CoA = 4-(trimethylamino)butanoyl-CoA + AMP + diphosphate. It carries out the reaction crotonobetaine + ATP + CoA = crotonobetainyl-CoA + AMP + diphosphate. The catalysed reaction is (R)-carnitine + ATP + CoA = (R)-carnitinyl-CoA + AMP + diphosphate. The protein operates within amine and polyamine metabolism; carnitine metabolism. Catalyzes the transfer of CoA to carnitine, generating the initial carnitinyl-CoA needed for the CaiB reaction cycle. Also has activity toward crotonobetaine and gamma-butyrobetaine. The protein is Crotonobetaine/carnitine--CoA ligase of Escherichia coli O17:K52:H18 (strain UMN026 / ExPEC).